A 189-amino-acid chain; its full sequence is uncharacterized protein (189 aa).

The protein belongs to the flavoredoxin family. FMN serves as cofactor.

This is an uncharacterized protein from Escherichia coli (strain K12).